We begin with the raw amino-acid sequence, 118 residues long: Small ribosomal subunit protein mS37 (118 aa).

A CHCH domain is found at 42-84 (EATCITEMSVMMACWKQNEFRDDACRKEIQGFLDCAARAQEAR). 2 short sequence motifs (cx9C motif) span residues 45 to 55 (CITEMSVMMAC) and 66 to 76 (CRKEIQGFLDC). 2 disulfides stabilise this stretch: C45/C76 and C55/C66.

Belongs to the mitochondrion-specific ribosomal protein mS37 family. Component of the mitochondrial small ribosomal subunit (mt-SSU). Mature mammalian 55S mitochondrial ribosomes consist of a small (28S) and a large (39S) subunit. The 28S small subunit contains a 12S ribosomal RNA (12S mt-rRNA) and 30 different proteins. The 39S large subunit contains a 16S rRNA (16S mt-rRNA), a copy of mitochondrial valine transfer RNA (mt-tRNA(Val)), which plays an integral structural role, and 52 different proteins.

It is found in the mitochondrion. The protein localises to the nucleus. The chain is Small ribosomal subunit protein mS37 (CHCHD1) from Homo sapiens (Human).